Here is a 350-residue protein sequence, read N- to C-terminus: tRNA uridine(34) hydroxylase (350 aa).

The Rhodanese domain occupies 146–240 (DDPDALFIDM…YARKAREQGL (95 aa)). Cysteine 200 (cysteine persulfide intermediate) is an active-site residue.

This sequence belongs to the TrhO family.

The catalysed reaction is uridine(34) in tRNA + AH2 + O2 = 5-hydroxyuridine(34) in tRNA + A + H2O. In terms of biological role, catalyzes oxygen-dependent 5-hydroxyuridine (ho5U) modification at position 34 in tRNAs. The sequence is that of tRNA uridine(34) hydroxylase from Shigella sonnei (strain Ss046).